The primary structure comprises 456 residues: Toxin CfTX-1 (456 aa).

The signal sequence occupies residues Met1–Ala20.

This sequence belongs to the jellyfish toxin family. Type I subfamily. Oligomer. In terms of processing, contains disulfide bonds. Nematocytes.

The protein resides in the secreted. The protein localises to the nematocyst. It localises to the target cell membrane. May cause profound effects on the cardiovascular system of anesthetized rats (at 25 ug/kg), since the fraction containing this toxin and CfTX-2 produces an initial increase in mean arterial pressure, followed by cardiovascular collapse in all animals within 1 minute of injection. To note, the same fraction does not induce significant change in heart rate. Has weak hemolytic activity. Is lethal to crayfish. Causes cutaneous inflammation in humans. May act as a pore-forming toxin, disrupting normal transmembrane ion concentration gradients in susceptible cells. In Chironex fleckeri (Australian box jellyfish), this protein is Toxin CfTX-1.